The following is a 178-amino-acid chain: Large ribosomal subunit protein uL6 (178 aa).

Belongs to the universal ribosomal protein uL6 family. As to quaternary structure, part of the 50S ribosomal subunit.

Functionally, this protein binds to the 23S rRNA, and is important in its secondary structure. It is located near the subunit interface in the base of the L7/L12 stalk, and near the tRNA binding site of the peptidyltransferase center. The chain is Large ribosomal subunit protein uL6 from Streptococcus pneumoniae (strain ATCC 700669 / Spain 23F-1).